We begin with the raw amino-acid sequence, 250 residues long: 2,3-bisphosphoglycerate-dependent phosphoglycerate mutase (250 aa).

Residues 8-15 (RHGESQWN), 21-22 (TG), R60, 87-90 (ERHY), K98, 114-115 (RR), and 183-184 (GN) each bind substrate. Residue H9 is the Tele-phosphohistidine intermediate of the active site. The active-site Proton donor/acceptor is the E87.

It belongs to the phosphoglycerate mutase family. BPG-dependent PGAM subfamily. As to quaternary structure, homodimer.

The enzyme catalyses (2R)-2-phosphoglycerate = (2R)-3-phosphoglycerate. Its pathway is carbohydrate degradation; glycolysis; pyruvate from D-glyceraldehyde 3-phosphate: step 3/5. Its function is as follows. Catalyzes the interconversion of 2-phosphoglycerate and 3-phosphoglycerate. This is 2,3-bisphosphoglycerate-dependent phosphoglycerate mutase from Bordetella pertussis (strain Tohama I / ATCC BAA-589 / NCTC 13251).